The sequence spans 204 residues: Tat proofreading chaperone DmsD (204 aa).

It belongs to the TorD/DmsD family. DmsD subfamily. In terms of assembly, monomer in solution.

Its function is as follows. Required for biogenesis/assembly of DMSO reductase, but not for the interaction of the DmsA signal peptide with the Tat system. May be part of a chaperone cascade complex that facilitates a folding-maturation pathway for the substrate protein. This is Tat proofreading chaperone DmsD from Salmonella typhimurium (strain LT2 / SGSC1412 / ATCC 700720).